The following is a 930-amino-acid chain: uncharacterized protein (930 aa).

The Nuclear localization signal signature appears at 434–441 (IRRGISRK).

It localises to the nucleus. This is an uncharacterized protein from Chaetomium thermophilum (strain DSM 1495 / CBS 144.50 / IMI 039719) (Thermochaetoides thermophila).